The following is a 761-amino-acid chain: Zinc finger protein 711 (761 aa).

Glycyl lysine isopeptide (Lys-Gly) (interchain with G-Cter in SUMO2) cross-links involve residues Lys-224, Lys-235, and Lys-296. 5 consecutive C2H2-type zinc fingers follow at residues 383 to 408 (YPCH…HPDH), 414 to 436 (YQCT…LESH), 476 to 499 (HKCK…LAVH), 505 to 527 (HVCV…MRTH), and 533 to 556 (YQCQ…KSKH). A required for transcriptional activation region spans residues 515-761 (RHPSELKKHM…IMRHHKEALM (247 aa)). The C2H2-type 6; atypical zinc finger occupies 562-584 (YKCEHCPQAFGDERELQRHLDLF). 3 residues coordinate Zn(2+): Cys-564, Cys-567, and His-580. C2H2-type zinc fingers lie at residues 590–613 (HQCP…ISVH), 619–641 (HKCE…SDIH), 647–670 (HQCR…LSVH), 676–698 (LKCK…MKTH), 704–727 (YQCE…ISIH), and 733–755 (HRCE…IMRH).

The protein belongs to the krueppel C2H2-type zinc-finger protein family. Interacts with PHF8. As to expression, expressed in neural tissues.

It is found in the nucleus. Its function is as follows. Transcription regulator required for brain development. Probably acts as a transcription factor that binds to the promoter of target genes and recruits PHF8 histone demethylase, leading to activated expression of genes involved in neuron development, such as KDM5C. May compete with transcription factor ARX for activation of expression of KDM5C. The sequence is that of Zinc finger protein 711 (ZNF711) from Homo sapiens (Human).